The sequence spans 313 residues: Protein FixB (313 aa).

Residue 255–283 (LYLAVGISGQIQHMVGANASQTIFAINKD) coordinates FAD.

This sequence belongs to the ETF alpha-subunit/FixB family. In terms of assembly, heterodimer of FixA and FixB.

The protein operates within amine and polyamine metabolism; carnitine metabolism. Required for anaerobic carnitine reduction. May bring reductant to CaiA. This is Protein FixB from Escherichia coli O157:H7.